Here is a 541-residue protein sequence, read N- to C-terminus: Putative asparagine synthetase [glutamine-hydrolyzing] 1 (541 aa).

The active-site For GATase activity is Cys-2. In terms of domain architecture, Glutamine amidotransferase type-2 spans 2-213 (CSISGIIVKD…PNSQLIYYLD (212 aa)). Residues 68-72 (RLAIV), 92-94 (NGE), and Asp-116 each bind L-glutamine. ATP contacts are provided by residues Val-289 and 363-364 (SG).

The protein belongs to the asparagine synthetase family.

It carries out the reaction L-aspartate + L-glutamine + ATP + H2O = L-asparagine + L-glutamate + AMP + diphosphate + H(+). It functions in the pathway amino-acid biosynthesis; L-asparagine biosynthesis; L-asparagine from L-aspartate (L-Gln route): step 1/1. In Methanocaldococcus jannaschii (strain ATCC 43067 / DSM 2661 / JAL-1 / JCM 10045 / NBRC 100440) (Methanococcus jannaschii), this protein is Putative asparagine synthetase [glutamine-hydrolyzing] 1.